A 510-amino-acid polypeptide reads, in one-letter code: Probable cytochrome P450 4d20 (510 aa).

A heme-binding site is contributed by Cys455.

This sequence belongs to the cytochrome P450 family. Heme serves as cofactor.

Its subcellular location is the endoplasmic reticulum membrane. The protein localises to the microsome membrane. In terms of biological role, may be involved in the metabolism of insect hormones and in the breakdown of synthetic insecticides. The chain is Probable cytochrome P450 4d20 (Cyp4d20) from Drosophila melanogaster (Fruit fly).